The chain runs to 249 residues: MQFDVVTLFPEMFTAITQSGITRRAFEQKKCALSLWNPRDFTSDKHRTVDDRPYGGGPGMVMMVKPLEAAVQAAKARQTEQGLAAPRVVYLSPQGKALTHERVMQLTTEPGLVLLCGRYEAVDQRFLDSCVDEEISLGDFVLSGGEIPAMALMDAVIRQLPGVLHDDASAVEDSFVNGLLDCPHYTRPEVYEGAAVPAVLMGGHHVEIEKWRRERALEATARKRPDLIVKAREAGLLTRSDEKFLSSML.

S-adenosyl-L-methionine-binding positions include glycine 117 and 137–142 (LGDFVL).

This sequence belongs to the RNA methyltransferase TrmD family. In terms of assembly, homodimer.

The protein localises to the cytoplasm. It carries out the reaction guanosine(37) in tRNA + S-adenosyl-L-methionine = N(1)-methylguanosine(37) in tRNA + S-adenosyl-L-homocysteine + H(+). In terms of biological role, specifically methylates guanosine-37 in various tRNAs. The chain is tRNA (guanine-N(1)-)-methyltransferase from Janthinobacterium sp. (strain Marseille) (Minibacterium massiliensis).